Reading from the N-terminus, the 172-residue chain is Shikimate kinase (172 aa).

17–22 (GTGKST) is an ATP binding site. Ser-21 provides a ligand contact to Mg(2+). Substrate contacts are provided by Asp-39, Arg-63, and Gly-84. Arg-122 contributes to the ATP binding site. Substrate is bound at residue Arg-140.

Belongs to the shikimate kinase family. As to quaternary structure, monomer. It depends on Mg(2+) as a cofactor.

The protein localises to the cytoplasm. It catalyses the reaction shikimate + ATP = 3-phosphoshikimate + ADP + H(+). It participates in metabolic intermediate biosynthesis; chorismate biosynthesis; chorismate from D-erythrose 4-phosphate and phosphoenolpyruvate: step 5/7. Catalyzes the specific phosphorylation of the 3-hydroxyl group of shikimic acid using ATP as a cosubstrate. In Staphylococcus haemolyticus (strain JCSC1435), this protein is Shikimate kinase.